A 66-amino-acid polypeptide reads, in one-letter code: Large ribosomal subunit protein bL33c (66 aa).

Belongs to the bacterial ribosomal protein bL33 family.

The protein resides in the plastid. It is found in the chloroplast. This chain is Large ribosomal subunit protein bL33c, found in Cicer arietinum (Chickpea).